A 198-amino-acid polypeptide reads, in one-letter code: Small ribosomal subunit protein uS4z (198 aa).

Phosphoserine is present on Ser68. One can recognise an S4 RNA-binding domain in the interval 109-180 (RRLQTIVFKS…PGRVKRRNEK (72 aa)). Residues 163-198 (TSPFGGGRPGRVKRRNEKSASKKASGGGDADGDDEE) are disordered.

The protein belongs to the universal ribosomal protein uS4 family. As to quaternary structure, binds to the translation initiation factors TIF3E1.

The protein is Small ribosomal subunit protein uS4z (RPS9B) of Arabidopsis thaliana (Mouse-ear cress).